The chain runs to 957 residues: SH3 domain-binding protein 4-A (957 aa).

In terms of domain architecture, SH3 1 spans 54 to 113 (ENVKEVVAIKDYCPNNFTTLKFSKGEHLYVLDASGGDWWYAHNSTEMGYIPSSYVQPLNY). Residues 312–449 (TSIVCRLDSS…LEPVMYVVMV (138 aa)) enclose the ZU5 domain. Positions 649-719 (TSLKYGKLLK…HAKNVLVVGK (71 aa)) constitute an SH3 2 domain.

In terms of assembly, homodimer or homooligomer.

The protein resides in the membrane. It is found in the clathrin-coated pit. The protein localises to the cytoplasmic vesicle. Its subcellular location is the clathrin-coated vesicle. It localises to the nucleus. Possible role in regulating endocytosis of the transferrin receptor at the plasma membrane. Alternatively, may function as a negative regulator of the amino acid-induced TOR signaling by inhibiting the formation of active Rag GTPase complexes. Preferentially binds inactive Rag GTPase complexes and prevents their interaction with the mTORC1 complex inhibiting its relocalization to lysosomes and its activation. Thereby, may indirectly regulate cell growth, proliferation and autophagy. This is SH3 domain-binding protein 4-A (sh3bp4-a) from Xenopus laevis (African clawed frog).